The following is a 313-amino-acid chain: tRNA dimethylallyltransferase (313 aa).

Residue 8–15 coordinates ATP; sequence GPTGTGKS. Residue 10–15 participates in substrate binding; sequence TGTGKS.

The protein belongs to the IPP transferase family. As to quaternary structure, monomer. The cofactor is Mg(2+).

It catalyses the reaction adenosine(37) in tRNA + dimethylallyl diphosphate = N(6)-dimethylallyladenosine(37) in tRNA + diphosphate. Its function is as follows. Catalyzes the transfer of a dimethylallyl group onto the adenine at position 37 in tRNAs that read codons beginning with uridine, leading to the formation of N6-(dimethylallyl)adenosine (i(6)A). This Mycolicibacterium gilvum (strain PYR-GCK) (Mycobacterium gilvum (strain PYR-GCK)) protein is tRNA dimethylallyltransferase.